Consider the following 66-residue polypeptide: Large ribosomal subunit protein bL35 (66 aa).

The segment covering 24-43 has biased composition (basic residues); the sequence is HKKAGKRHNLSKKSKARKRR. A disordered region spans residues 24-44; sequence HKKAGKRHNLSKKSKARKRRL.

Belongs to the bacterial ribosomal protein bL35 family.

The polypeptide is Large ribosomal subunit protein bL35 (Dictyoglomus thermophilum (strain ATCC 35947 / DSM 3960 / H-6-12)).